The primary structure comprises 124 residues: MPTIQQLIRSKRTKIEKKTKSPALKACPQRRGVCTRVYTTTPKKPNSALRKVARVRLTSGFEVTAYIPGIGHNLQEHSVVLVRGGRVKDLPGVRYHIVRGALDAAGVKDRRQSRSKYGAKRPKA.

Residues 105 to 124 are disordered; sequence AGVKDRRQSRSKYGAKRPKA. Residues 113–124 are compositionally biased toward basic residues; that stretch reads SRSKYGAKRPKA.

This sequence belongs to the universal ribosomal protein uS12 family. Part of the 30S ribosomal subunit.

The protein localises to the plastid. It is found in the cyanelle. With S4 and S5 plays an important role in translational accuracy. Located at the interface of the 30S and 50S subunits. The polypeptide is Small ribosomal subunit protein uS12c (rps12) (Cyanophora paradoxa).